Consider the following 556-residue polypeptide: MNSLEQVKGLIKEEIQAAVLKAELATEEQIPNVVLESPKDKTNGDFSTNMAMQLARVAKKAPRMIAEELVANFDKAKASTEKIEIAGPGFINFYMDNSYLTDLIPTIVNAGEAYGETNTGKGEKVQVEFVSANPTGDLHLGHARGAAVGDTLCNLLAKAGYDVSREYYINDAGNQIHNLALSVEARYMQALGLEKEMPEDGYHGADIIGIGKRLAEEFGDRYAKADEKESYEFYREYGLKYELAKLQKDLESFRVKFDVWFSETSLYKNGKIDQALAVLKERDEIFEEDGATWFRSMTYGDDKNRVLIKNDGSYTYLTPDIAYHRDKLERGFDKLINIWGADHHGYIPRMKAAIQALGYDKETLEVEIIQMVQLYQNGEKMKMSKRTGKAVTLRELMEEVGVDAMRYFFAMRSGDSHLDFDMDLAVSKSNENPVYYAQYAHARVCSILRQGEELGLATGGDVNYKLVTSEKEVELLKKLGEFPAVVADAAQKRLPHRITNYAFELAATLHSFYNAEKVLNQDNLELSKARYELMKAVRTTLQNALAIVGVSAPEKM.

The short motif at 132 to 142 is the 'HIGH' region element; the sequence is ANPTGDLHLGH.

Belongs to the class-I aminoacyl-tRNA synthetase family. As to quaternary structure, monomer.

It localises to the cytoplasm. It catalyses the reaction tRNA(Arg) + L-arginine + ATP = L-arginyl-tRNA(Arg) + AMP + diphosphate. The protein is Arginine--tRNA ligase 1 of Bacillus anthracis.